Reading from the N-terminus, the 279-residue chain is NADPH-dependent 7-cyano-7-deazaguanine reductase (279 aa).

86-88 (IES) is a binding site for substrate. An NADPH-binding site is contributed by 88–89 (SK). The active-site Thioimide intermediate is Cys-187. The Proton donor role is filled by Asp-194. 226 to 227 (HE) provides a ligand contact to substrate. 255–256 (RG) is an NADPH binding site.

The protein belongs to the GTP cyclohydrolase I family. QueF type 2 subfamily. As to quaternary structure, homodimer.

Its subcellular location is the cytoplasm. The enzyme catalyses 7-aminomethyl-7-carbaguanine + 2 NADP(+) = 7-cyano-7-deazaguanine + 2 NADPH + 3 H(+). Its pathway is tRNA modification; tRNA-queuosine biosynthesis. Catalyzes the NADPH-dependent reduction of 7-cyano-7-deazaguanine (preQ0) to 7-aminomethyl-7-deazaguanine (preQ1). The sequence is that of NADPH-dependent 7-cyano-7-deazaguanine reductase from Pasteurella multocida (strain Pm70).